Consider the following 1548-residue polypeptide: Lysine-specific demethylase 5D (1548 aa).

Residues 14–55 (CPVFEPSWAEFRDPLGYIAKIRPIAEKSGICKIRPPADWQPP) form the JmjN domain. The 91-residue stretch at 79 to 169 (TRVKLNYLDQ…IIYPYEIFQS (91 aa)) folds into the ARID domain. Residues K205, K229, K244, and K279 each participate in a glycyl lysine isopeptide (Lys-Gly) (interchain with G-Cter in SUMO2) cross-link. A disordered region spans residues 208–229 (CYSRRGKRLQPEPEPTEEDIEK). Residues S300 and S316 each carry the phosphoserine modification. The segment at 325 to 371 (VCRICSRGDEVDKFLLCDGCSDNYHIFCLLPPLSEVPKGVWRCPKCI) adopts a PHD-type 1 zinc-finger fold. Y439 contacts 2-oxoglutarate. Positions 467-633 (EYAACGWNLN…VGRQCIEHYR (167 aa)) constitute a JmjC domain. Fe cation-binding residues include H513 and E515. Residues S521, N523, and K531 each contribute to the 2-oxoglutarate site. A Fe cation-binding site is contributed by H601. The segment at 706 to 758 (CIKCKTTCFLSALACYDCPDSLVCLSHINDLCKCSRNRQYLRYRYTLDELPAM) adopts a C5HC2 zinc-finger fold. 2 positions are modified to phosphoserine: S889 and S893. K1123 is covalently cross-linked (Glycyl lysine isopeptide (Lys-Gly) (interchain with G-Cter in SUMO2)). The PHD-type 2 zinc-finger motif lies at 1182-1243 (ICICGQVCAG…DTKFLCPLCM (62 aa)). S1355 carries the phosphoserine modification. Residues 1438 to 1468 (KPENPGNWSEEQTPERRRQRRQKVVLSRKGE) form a disordered region.

Belongs to the JARID1 histone demethylase family. Interacts withPCGF6, MSH5, ZMYND8, AR. Requires L-ascorbate as cofactor. It depends on Fe(2+) as a cofactor.

The protein resides in the nucleus. The enzyme catalyses N(6),N(6),N(6)-trimethyl-L-lysyl(4)-[histone H3] + 3 2-oxoglutarate + 3 O2 = L-lysyl(4)-[histone H3] + 3 formaldehyde + 3 succinate + 3 CO2. Its function is as follows. Histone demethylase that specifically demethylates 'Lys-4' of histone H3, thereby playing a central role in histone code. Does not demethylate histone H3 'Lys-9', H3 'Lys-27', H3 'Lys-36', H3 'Lys-79' or H4 'Lys-20'. Demethylates trimethylated and dimethylated but not monomethylated H3 'Lys-4'. May play a role in spermatogenesis. Involved in transcriptional repression of diverse metastasis-associated genes; in this function seems to cooperate with ZMYND8. Suppresses prostate cancer cell invasion. Regulates androgen receptor (AR) transcriptional activity by demethylating H3K4me3 active transcription marks. This chain is Lysine-specific demethylase 5D (Kdm5d), found in Mus musculus (Mouse).